We begin with the raw amino-acid sequence, 165 residues long: 2-C-methyl-D-erythritol 2,4-cyclodiphosphate synthase (165 aa).

A divalent metal cation contacts are provided by aspartate 9 and histidine 11. 4-CDP-2-C-methyl-D-erythritol 2-phosphate-binding positions include 9–11 (DVH) and 35–36 (HS). Histidine 43 provides a ligand contact to a divalent metal cation. Residues 57 to 59 (DIG), 101 to 107 (AQAPKML), 133 to 136 (TTTE), phenylalanine 140, and arginine 143 contribute to the 4-CDP-2-C-methyl-D-erythritol 2-phosphate site.

This sequence belongs to the IspF family. As to quaternary structure, homotrimer. A divalent metal cation is required as a cofactor.

The catalysed reaction is 4-CDP-2-C-methyl-D-erythritol 2-phosphate = 2-C-methyl-D-erythritol 2,4-cyclic diphosphate + CMP. It participates in isoprenoid biosynthesis; isopentenyl diphosphate biosynthesis via DXP pathway; isopentenyl diphosphate from 1-deoxy-D-xylulose 5-phosphate: step 4/6. In terms of biological role, involved in the biosynthesis of isopentenyl diphosphate (IPP) and dimethylallyl diphosphate (DMAPP), two major building blocks of isoprenoid compounds. Catalyzes the conversion of 4-diphosphocytidyl-2-C-methyl-D-erythritol 2-phosphate (CDP-ME2P) to 2-C-methyl-D-erythritol 2,4-cyclodiphosphate (ME-CPP) with a corresponding release of cytidine 5-monophosphate (CMP). This is 2-C-methyl-D-erythritol 2,4-cyclodiphosphate synthase from Pseudoalteromonas translucida (strain TAC 125).